Consider the following 607-residue polypeptide: Glutamine--fructose-6-phosphate aminotransferase [isomerizing] (607 aa).

The active-site Nucleophile; for GATase activity is Cys-2. One can recognise a Glutamine amidotransferase type-2 domain in the interval 2-217 (CGIVGIVGHS…DGDWAVVRRD (216 aa)). SIS domains lie at 283-422 (LPFD…ARGV) and 455-597 (IARE…VDQP). Residue Lys-602 is the For Fru-6P isomerization activity of the active site.

Homodimer.

It is found in the cytoplasm. It catalyses the reaction D-fructose 6-phosphate + L-glutamine = D-glucosamine 6-phosphate + L-glutamate. Its function is as follows. Catalyzes the first step in hexosamine metabolism, converting fructose-6P into glucosamine-6P using glutamine as a nitrogen source. In Mesorhizobium japonicum (strain LMG 29417 / CECT 9101 / MAFF 303099) (Mesorhizobium loti (strain MAFF 303099)), this protein is Glutamine--fructose-6-phosphate aminotransferase [isomerizing].